We begin with the raw amino-acid sequence, 633 residues long: Alpha-amylase (633 aa).

Glu-123 serves as the catalytic Nucleophile. Catalysis depends on Asp-214, which acts as the Proton donor.

This sequence belongs to the glycosyl hydrolase 57 family.

It carries out the reaction Endohydrolysis of (1-&gt;4)-alpha-D-glucosidic linkages in polysaccharides containing three or more (1-&gt;4)-alpha-linked D-glucose units.. The sequence is that of Alpha-amylase (amyA) from Pyrococcus horikoshii (strain ATCC 700860 / DSM 12428 / JCM 9974 / NBRC 100139 / OT-3).